Reading from the N-terminus, the 397-residue chain is Phosphoglycerate kinase (397 aa).

Substrate is bound by residues 21 to 23 (DFN), Arg37, 60 to 63 (HLGR), Arg119, and Arg152. ATP contacts are provided by residues Lys203, Gly294, Glu325, and 354–357 (GGDS).

Belongs to the phosphoglycerate kinase family. As to quaternary structure, monomer.

The protein resides in the cytoplasm. The catalysed reaction is (2R)-3-phosphoglycerate + ATP = (2R)-3-phospho-glyceroyl phosphate + ADP. It participates in carbohydrate degradation; glycolysis; pyruvate from D-glyceraldehyde 3-phosphate: step 2/5. The polypeptide is Phosphoglycerate kinase (Chlorobium phaeovibrioides (strain DSM 265 / 1930) (Prosthecochloris vibrioformis (strain DSM 265))).